The sequence spans 327 residues: Peroxidase 21 (327 aa).

The N-terminal stretch at 1-28 is a signal peptide; the sequence is MANAKPFCLLGFFCLLLQLFSIFHIGNG. 4 cysteine pairs are disulfide-bonded: C39/C118, C72/C77, C124/C323, and C204/C231. The Proton acceptor role is filled by H70. 4 residues coordinate Ca(2+): D71, V74, D78, and S80. Substrate is bound at residue P167. A glycan (N-linked (GlcNAc...) asparagine) is linked at N170. H197 serves as a coordination point for heme b. S198 is a Ca(2+) binding site. Ca(2+)-binding residues include D247, T250, and D255.

It belongs to the peroxidase family. Classical plant (class III) peroxidase subfamily. Heme b serves as cofactor. Ca(2+) is required as a cofactor. In terms of tissue distribution, preferentially expressed in roots and leaves, slightly in stems.

The enzyme catalyses 2 a phenolic donor + H2O2 = 2 a phenolic radical donor + 2 H2O. Functionally, removal of H(2)O(2), oxidation of toxic reductants, biosynthesis and degradation of lignin, suberization, auxin catabolism, response to environmental stresses such as wounding, pathogen attack and oxidative stress. These functions might be dependent on each isozyme/isoform in each plant tissue. Its function is as follows. Might function as heat shock-like defense protein. May be implicated in the systemic acquired resistance response. This chain is Peroxidase 21 (PER21), found in Arabidopsis thaliana (Mouse-ear cress).